The primary structure comprises 98 residues: NADH-ubiquinone oxidoreductase chain 4L (98 aa).

The next 3 helical transmembrane spans lie at 1 to 21, 29 to 49, and 61 to 81; these read MPVVYVNIFLAFIVSLMGLLI, SLLCLEGMMLSLFVMLTVTVL, and IILLVFAACEAALGLSLLVMV.

This sequence belongs to the complex I subunit 4L family. As to quaternary structure, core subunit of respiratory chain NADH dehydrogenase (Complex I) which is composed of 45 different subunits.

Its subcellular location is the mitochondrion inner membrane. The enzyme catalyses a ubiquinone + NADH + 5 H(+)(in) = a ubiquinol + NAD(+) + 4 H(+)(out). Its function is as follows. Core subunit of the mitochondrial membrane respiratory chain NADH dehydrogenase (Complex I) which catalyzes electron transfer from NADH through the respiratory chain, using ubiquinone as an electron acceptor. Part of the enzyme membrane arm which is embedded in the lipid bilayer and involved in proton translocation. This Ursus americanus (American black bear) protein is NADH-ubiquinone oxidoreductase chain 4L (MT-ND4L).